The following is a 55-amino-acid chain: Myrmicitoxin(1)-Pr6b (55 aa).

An N-terminal signal peptide occupies residues Met-1–Ala-22. Positions Glu-23–Ile-29 are excised as a propeptide.

The protein belongs to the formicidae venom clade 4 family. As to expression, expressed by the venom gland.

It is found in the secreted. Its function is as follows. Probable neurotoxin. The polypeptide is Myrmicitoxin(1)-Pr6b (Pogonomyrmex rugosus (Desert harvester ant)).